The primary structure comprises 298 residues: CCR4-NOT transcription complex subunit 9 (298 aa).

This sequence belongs to the CNOT9 family. In terms of assembly, homodimer. Component of the CCR4-NOT complex.

It localises to the nucleus. The protein resides in the cytoplasm. Its subcellular location is the P-body. In terms of biological role, component of the CCR4-NOT complex which is one of the major cellular mRNA deadenylases and is linked to various cellular processes including bulk mRNA degradation, miRNA-mediated repression, translational repression during translational initiation and general transcription regulation. Additional complex functions may be a consequence of its influence on mRNA expression. Involved in down-regulation of MYB- and JUN-dependent transcription. Enhances ligand-dependent transcriptional activity of nuclear hormone receptors. May play a role in cell differentiation. The protein is CCR4-NOT transcription complex subunit 9 of Danio rerio (Zebrafish).